The chain runs to 356 residues: MSQSGKNGLTYSDAGVDIDAGNLMVEKIKPHVRSTRRPGADGEIGGFGGLFDLKAAGFSDPVLVAANDGVGTKLKIAIDAGKHDTVGIDLVAMCVNDLVVQGAEPLFFLDYFATGKLDPDQGAAIVAGIAAGCREAGCALIGGETAEMPGMYSGGDYDLAGFAVGAAERGQLLPAGNIAEGDVILGLSSSGVHSNGYSLVRKIVSLSGLAWDAPAPFGDGTVADLLMTPTRIYVKPLLKAIRETGAIKALAHITGGGFPENIPRVLPKPLAAEIDLDAIKPPAVFSWLAKTGGVAANEMLRTFNCGVGMIAVVSAGEAEKVAAVLAREGETVFTLGRMVSRSEDAPGTIYKGNLAI.

The protein belongs to the AIR synthase family.

The protein resides in the cytoplasm. It catalyses the reaction 2-formamido-N(1)-(5-O-phospho-beta-D-ribosyl)acetamidine + ATP = 5-amino-1-(5-phospho-beta-D-ribosyl)imidazole + ADP + phosphate + H(+). It participates in purine metabolism; IMP biosynthesis via de novo pathway; 5-amino-1-(5-phospho-D-ribosyl)imidazole from N(2)-formyl-N(1)-(5-phospho-D-ribosyl)glycinamide: step 2/2. The sequence is that of Phosphoribosylformylglycinamidine cyclo-ligase from Sinorhizobium medicae (strain WSM419) (Ensifer medicae).